The sequence spans 665 residues: Sodium/glucose cotransporter 1 (665 aa).

Residues 1 to 24 lie on the Extracellular side of the membrane; it reads MDSSTLSPAVTATDAPIPSYERIR. A helical transmembrane segment spans residues 25–47; the sequence is NAADISVIVIYFVVVMAVGLWAM. Topologically, residues 48-66 are cytoplasmic; sequence FSTNRGTVGGFFLAGRSMV. The chain crosses the membrane as a helical span at residues 67–90; that stretch reads WWPIGASLFASNIGSGHFVGLAGT. At 91–95 the chain is on the extracellular side; the sequence is GAAAG. The helical transmembrane segment at 96–117 threads the bilayer; it reads IAMGGFEWNALVLVVVLGWIFV. Residues 118–139 lie on the Cytoplasmic side of the membrane; that stretch reads PIYIKAGVVTMPEYLRKRFGGK. A helical membrane pass occupies residues 140-169; it reads RIQIYLSVLSLLLYIFTKISADIFSGAIFI. The Extracellular segment spans residues 170-176; it reads NLALGLD. A helical transmembrane segment spans residues 177-193; it reads IYLAIFILLAITALYTI. Residues 194 to 202 lie on the Cytoplasmic side of the membrane; the sequence is TGGLAAVIY. A helical membrane pass occupies residues 203–221; sequence TDTLQTAIMLVGSFILTGF. Over 222 to 275 the chain is Extracellular; that stretch reads AFNEVGGYEAFMDKYMKAIPTKVSNGNFTAKEECYTPRADSFHIFRDPITGDMP. N-linked (GlcNAc...) asparagine glycosylation occurs at asparagine 248. 5 disulfides stabilise this stretch: cysteine 255/cysteine 511, cysteine 255/cysteine 611, cysteine 345/cysteine 351, cysteine 355/cysteine 361, and cysteine 517/cysteine 522. A helical transmembrane segment spans residues 276–295; it reads WPGLIFGLAILALWYWCTDQ. Residues 296–309 lie on the Cytoplasmic side of the membrane; the sequence is VIVQRCLSAKNMSH. Residues 310 to 331 form a helical membrane-spanning segment; that stretch reads VKADCTLCGYLKLLPMFLMVMP. Residues 332–375 are Extracellular-facing; sequence GMISRILYTEKIACVLPEECQKYCGTPVGCTNIAYPTLVVELMP. Residues 376 to 406 traverse the membrane as a helical segment; sequence NGLRGLMLSVMMASLMSSLTSIFNSASTLFT. Residues 407 to 422 lie on the Cytoplasmic side of the membrane; sequence MDIYTKIRKKASEKEL. Residues 423 to 444 traverse the membrane as a helical segment; sequence MIAGRLFILVLIGISIAWVPIV. The Extracellular portion of the chain corresponds to 445 to 451; the sequence is QSAQSGQ. A helical transmembrane segment spans residues 452-477; that stretch reads LFDYIQSITSYLGPPIAAVFLLAIFC. Glutamine 457 contacts D-glucose. The Cytoplasmic portion of the chain corresponds to 478–481; it reads KRVN. A helical transmembrane segment spans residues 482-504; the sequence is EQGAFWGLILGFLIGISRMITEF. At 505 to 525 the chain is on the extracellular side; the sequence is AYGTGSCMEPSNCPKIICGVH. The chain crosses the membrane as a helical span at residues 526-547; sequence YLYFAIILFVISVITILIISFL. The Cytoplasmic portion of the chain corresponds to 548-645; that stretch reads TKPIPDVHLY…TSEKPLWRTV (98 aa). Residue serine 585 is modified to Phosphoserine. Threonine 588 carries the phosphothreonine modification. The helical transmembrane segment at 646 to 663 threads the bilayer; that stretch reads VNINGIILLAVAVFCHAY. At 664 to 665 the chain is on the extracellular side; it reads FA.

The protein belongs to the sodium:solute symporter (SSF) (TC 2.A.21) family. Post-translationally, N-glycosylation is not necessary for the cotransporter function. In terms of tissue distribution, expressed in enterocytes and enteroendocrine cells of small intestine (at protein level). Expressed in S3 segments of renal proximal tubules (at protein level). Expressed in endometrial glandular and epithelial cells (at protein level).

The protein resides in the apical cell membrane. The catalysed reaction is D-glucose(out) + 2 Na(+)(out) = D-glucose(in) + 2 Na(+)(in). It catalyses the reaction D-galactose(out) + 2 Na(+)(out) = D-galactose(in) + 2 Na(+)(in). Enhanced by the interaction with PDZK1IP1/MAP17; but unlike SLC5A2/SGLT2, PDZK1IP1 is not essential for SLC5A1 transporter activity. Possibly modulated by cholesterol binding. In terms of biological role, electrogenic Na(+)-coupled sugar symporter that actively transports D-glucose or D-galactose at the plasma membrane, with a Na(+) to sugar coupling ratio of 2:1. Transporter activity is driven by a transmembrane Na(+) electrochemical gradient set by the Na(+)/K(+) pump. Has a primary role in the transport of dietary monosaccharides from enterocytes to blood. Responsible for the absorption of D-glucose or D-galactose across the apical brush-border membrane of enterocytes, whereas basolateral exit is provided by GLUT2. Additionally, functions as a D-glucose sensor in enteroendocrine cells, triggering the secretion of the incretins GCG and GIP that control food intake and energy homeostasis. Together with SGLT2, functions in reabsorption of D-glucose from glomerular filtrate, playing a nonredundant role in the S3 segment of the proximal tubules. Transports D-glucose into endometrial epithelial cells, controlling glycogen synthesis and nutritional support for the embryo as well as the decidual transformation of endometrium prior to conception. Acts as a water channel enabling passive water transport in response to the osmotic gradient created upon sugar and Na(+) uptake. Has high water conductivity comparable to aquaporins and therefore is expected to play an important role in transepithelial water permeability, especially in the small intestine. The chain is Sodium/glucose cotransporter 1 (Slc5a1) from Mus musculus (Mouse).